Reading from the N-terminus, the 84-residue chain is Large ribosomal subunit protein bL27 (84 aa).

Residues 1 to 21 (MAHKKAGGSTRNGRDSNPKYL) are disordered.

This sequence belongs to the bacterial ribosomal protein bL27 family.

The protein is Large ribosomal subunit protein bL27 of Francisella tularensis subsp. holarctica (strain FTNF002-00 / FTA).